The sequence spans 180 residues: MAEERQQRGRDRDRNREEKVDDGMIEKLVAVNRVSKTVKGGRQFTFTALTVVGDGEGKVGFGYGKAREVPVAIQKSMEQARKNLVSVDLNNGTLWHTIKDGHGAARVFMQPASEGTGVIAGGAMRAVLEAVGVKNVLAKATGSRNPINLVRATVKGLSAAQSPARIAAKRGKKVEELNHG.

An S5 DRBM domain is found at 24 to 87 (MIEKLVAVNR…EQARKNLVSV (64 aa)).

It belongs to the universal ribosomal protein uS5 family. In terms of assembly, part of the 30S ribosomal subunit. Contacts proteins S4 and S8.

Its function is as follows. With S4 and S12 plays an important role in translational accuracy. In terms of biological role, located at the back of the 30S subunit body where it stabilizes the conformation of the head with respect to the body. This Stenotrophomonas maltophilia (strain R551-3) protein is Small ribosomal subunit protein uS5.